Here is a 51-residue protein sequence, read N- to C-terminus: ATP synthase protein 8 (51 aa).

A helical transmembrane segment spans residues leucine 7–leucine 27.

The protein belongs to the ATPase protein 8 family. As to quaternary structure, F-type ATPases have 2 components, CF(1) - the catalytic core - and CF(0) - the membrane proton channel.

The protein localises to the mitochondrion membrane. In terms of biological role, mitochondrial membrane ATP synthase (F(1)F(0) ATP synthase or Complex V) produces ATP from ADP in the presence of a proton gradient across the membrane which is generated by electron transport complexes of the respiratory chain. F-type ATPases consist of two structural domains, F(1) - containing the extramembraneous catalytic core and F(0) - containing the membrane proton channel, linked together by a central stalk and a peripheral stalk. During catalysis, ATP synthesis in the catalytic domain of F(1) is coupled via a rotary mechanism of the central stalk subunits to proton translocation. Part of the complex F(0) domain. Minor subunit located with subunit a in the membrane. The protein is ATP synthase protein 8 (MT-ATP8) of Limulus polyphemus (Atlantic horseshoe crab).